The sequence spans 290 residues: MAAVEKRRQAVPPPAGFTDSGRQSVSRAAGAAESEEDFLRQVGVTEMLRAALLKVLEARPEEPIAFLAHYFENMGLRSPVNGGAGEPPGQLLLQQQRLGRALWHLRLAHHSQRAAFNNNVSVAYECLSAGGRRKRPGLDGRTYSELLRRICRDGQAPEEVVAPLLRKVQCRDHEAVPLSVFRAGTLTCFVLLEFVARAGALFQLLEDSAAAVADRRVGQAVLDTLEGALQASDAAAPARFLEAGSRLGPDSLALALDRAVGGRRPSAPMTREEFLERAAALFIAKVKPVG.

Residues 1-30 are disordered; it reads MAAVEKRRQAVPPPAGFTDSGRQSVSRAAG. A phosphoserine mark is found at serine 34 and serine 266.

Part of the neuronal tubulin polyglutamylase complex which contains TPGS1, TPGS2, TTLL1, LRRC49 and NICN1. Interacts with PCM1, CSTPP1 and LRRC49.

The protein resides in the cytoplasm. It is found in the cytoskeleton. It localises to the cilium axoneme. Its subcellular location is the flagellum axoneme. The protein localises to the cilium basal body. The protein resides in the flagellum basal body. It is found in the cell projection. It localises to the axon. Its subcellular location is the dendrite. The protein localises to the microtubule organizing center. The protein resides in the centrosome. It is found in the centriolar satellite. Its function is as follows. Subunit of the tubulin polyglutamylase complex (TPGC). The complex mediates cilia and flagella polyglutamylation which is essential for their biogenesis and motility. May act in the targeting of the tubulin polyglutamylase complex. Required for the development of the spermatid flagellum. The polypeptide is Tubulin polyglutamylase complex subunit 1 (Homo sapiens (Human)).